The primary structure comprises 372 residues: Cyclic GMP-AMP synthase-like receptor (372 aa).

T68 is a GTP binding site. Residues S70 and 82-84 contribute to the ATP site; that span reads EFD. Mg(2+) contacts are provided by E82, D84, and D190. GTP is bound by residues D190 and 236-243; that span reads LVCAPYWE. Residues 240-243, K261, and 274-278 contribute to the ATP site; these read PYWE and SYTIK.

It belongs to the mab-21 family. Requires Mg(2+) as cofactor. It depends on Mn(2+) as a cofactor.

It carries out the reaction GTP + ATP = 3',2'-cGAMP + 2 diphosphate. It catalyses the reaction GTP + ATP = pppA(2'-5')pG + diphosphate. The enzyme catalyses pppA(2'-5')pG = 3',2'-cGAMP + diphosphate. The enzyme activity is specifically activated by double-stranded RNA (dsRNA). In terms of biological role, nucleotidyltransferase that catalyzes the formation of cyclic GMP-AMP (3',2'-cGAMP) from ATP and GTP and plays a key role in innate immunity. Synthesizes 3',2'-cGAMP in a two-step reaction through production of the linear intermediate pppA(2'-5')pG. Acts as a key sensor of double-stranded RNA (dsRNA), the presence of dsRNA in the cytoplasm being a danger signal that triggers the immune responses. Directly binds dsRNA longer than 15 bp, activating the nucleotidyltransferase activity, leading to synthesis of 3',2'-cGAMP, a second messenger that binds to and activates Sting, thereby triggering the antiviral immune response via activation of the NF-kappa-B transcription factor Rel (Relish). The chain is Cyclic GMP-AMP synthase-like receptor from Drosophila eugracilis (Fruit fly).